A 343-amino-acid polypeptide reads, in one-letter code: Histone H1.8 (343 aa).

The span at 1–32 (MAPGSIASSDTSSSTSSSSTSSASSASAEGSS) shows a compositional bias: low complexity. 2 disordered regions span residues 1–50 (MAPG…VRAP) and 122–343 (ATGS…EAEG). Residues 52 to 130 (RHPPVLRMVL…GATGSFKLVP (79 aa)) form the H15 domain. Positions 132–142 (DKRKIPPRKTA) are enriched in basic residues. Composition is skewed to basic and acidic residues over residues 150 to 183 (EGKD…ERAA), 199 to 219 (QTKD…RPDK), and 235 to 247 (KVKE…ADTK). Positions 161 to 176 (KKDPANTVEVKKGSRK) match the Nuclear localization signal motif. Polar residues predominate over residues 253-265 (QPGSQSSKSTVTK).

This sequence belongs to the histone H1/H5 family. Oocyte (at protein level).

The protein resides in the cytoplasm. It is found in the nucleus. The protein localises to the chromosome. Functionally, may play a key role in the control of gene expression during oogenesis and early embryogenesis, presumably through the perturbation of chromatin structure. Essential for meiotic maturation of germinal vesicle-stage oocytes. The somatic type linker histone H1c is rapidly replaced by H1oo in a donor nucleus transplanted into an oocyte. The greater mobility of H1oo as compared to H1c may contribute to this rapid replacement and increased instability of the embryonic chromatin structure. The rapid replacement of H1c with H1oo may play an important role in nuclear remodeling. The sequence is that of Histone H1.8 from Bos taurus (Bovine).